A 386-amino-acid chain; its full sequence is Caspase-1-A (386 aa).

The propeptide occupies Met-1–Glu-100. The 67-residue stretch at Ser-22–Leu-88 folds into the CARD domain. Catalysis depends on residues His-218 and Cys-274. A propeptide spanning residues Asp-287–Asp-296 is cleaved from the precursor.

The protein belongs to the peptidase C14A family. Heterotetramer that consists of two anti-parallel arranged heterodimers, each one formed by a 20 kDa (Caspase-1 subunit p20) and a 10 kDa (Caspase-1 subunit p10) subunit. In terms of assembly, heterotetramer that consists of two anti-parallel arranged heterodimers, each one formed by a 20 kDa (Caspase-1 subunit p20) and a 10 kDa (Caspase-1 subunit p10) subunit. Can form a heterodimer with isoform epsilon which then has an inhibitory effect. The two subunits are derived from the precursor sequence by an autocatalytic mechanism.

It localises to the cytoplasm. Its subcellular location is the cell membrane. It carries out the reaction Strict requirement for an Asp residue at position P1 and has a preferred cleavage sequence of Tyr-Val-Ala-Asp-|-.. Functionally, thiol protease involved in a variety of inflammatory processes by proteolytically cleaving other proteins, such as the precursors of the inflammatory cytokines interleukin-1 beta (IL1B) and interleukin 18 (IL18) as well as the pyroptosis inducer Gasdermin-D (GSDMD), into active mature peptides. Plays a key role in cell immunity as an inflammatory response initiator: once activated through formation of an inflammasome complex, it initiates a pro-inflammatory response through the cleavage of the two inflammatory cytokines IL1B and IL18, releasing the mature cytokines which are involved in a variety of inflammatory processes. Cleaves a tetrapeptide after an Asp residue at position P1. Also initiates pyroptosis, a programmed lytic cell death pathway, through cleavage of GSDMD. The chain is Caspase-1-A (casp1-a) from Xenopus laevis (African clawed frog).